Here is a 469-residue protein sequence, read N- to C-terminus: Swarming motility regulation sensor protein RssA (469 aa).

The next 2 helical transmembrane spans lie at 12-32 (IIFQVLAILLLWGLLVAWVKY) and 167-187 (VPLLGILAAIIVTLLFTAYFS). In terms of domain architecture, Histidine kinase spans 245-459 (DAAHELRTPI…GFIIDLPESY (215 aa)). His248 carries the phosphohistidine; by autocatalysis modification.

It is found in the cell inner membrane. It carries out the reaction ATP + protein L-histidine = ADP + protein N-phospho-L-histidine.. Member of the two-component regulatory system RssA/RssB involved in regulation of swarming motility which has been shown to be inhibited by saturated fatty acids. RssA/RssB regulates cellular fatty acid composition, hemolysin production and cell surface topography. RssA/RssB negatively regulates the activity of SlhBA. It can also act as a negative regulator for the control of the swarming initiation. The sequence is that of Swarming motility regulation sensor protein RssA (rssA) from Serratia marcescens.